The primary structure comprises 387 residues: 3-ketoacyl-CoA thiolase (387 aa).

Catalysis depends on Cys-91, which acts as the Acyl-thioester intermediate. Catalysis depends on proton acceptor residues His-343 and Cys-373.

It belongs to the thiolase-like superfamily. Thiolase family. As to quaternary structure, heterotetramer of two alpha chains (FadB) and two beta chains (FadA).

It localises to the cytoplasm. It carries out the reaction an acyl-CoA + acetyl-CoA = a 3-oxoacyl-CoA + CoA. It functions in the pathway lipid metabolism; fatty acid beta-oxidation. Catalyzes the final step of fatty acid oxidation in which acetyl-CoA is released and the CoA ester of a fatty acid two carbons shorter is formed. The chain is 3-ketoacyl-CoA thiolase from Shewanella sp. (strain MR-4).